The primary structure comprises 188 residues: Thymidine kinase (188 aa).

Glycine 17–threonine 24 is an ATP binding site. Glutamate 92 (proton acceptor) is an active-site residue. Residue phenylalanine 121 participates in substrate binding. Zn(2+)-binding residues include cysteine 146 and cysteine 149. Residue leucine 166–glycine 170 coordinates substrate. Zn(2+) contacts are provided by cysteine 179 and cysteine 182.

Belongs to the thymidine kinase family.

It catalyses the reaction thymidine + ATP = dTMP + ADP + H(+). Phosphorylates thymidine. ASFV replicates in the cytoplasm of infected cells and contains genes encoding a number of enzymes needed for DNA synthesis, including thymidine kinase. Important for growth in swine macrophages in vitro and is a virus virulence factor in swine. The chain is Thymidine kinase from African swine fever virus (isolate Tick/South Africa/Pretoriuskop Pr4/1996) (ASFV).